The chain runs to 395 residues: F-box/kelch-repeat protein At4g39570 (395 aa).

The span at 1–25 (MSSPERKRKRVTSTKNPSVKKKKKI) shows a compositional bias: basic residues. The interval 1 to 29 (MSSPERKRKRVTSTKNPSVKKKKKISPVP) is disordered. The F-box domain maps to 29–75 (PTPIPSLPDDLLVSIFARVSRLYYPILSLVSKSFRSLLRSPELYETR). 2 Kelch repeats span residues 150–197 (DIYF…VIDG) and 198–246 (KIYV…RSAY).

This chain is F-box/kelch-repeat protein At4g39570, found in Arabidopsis thaliana (Mouse-ear cress).